Reading from the N-terminus, the 112-residue chain is Integration host factor subunit alpha (112 aa).

The protein belongs to the bacterial histone-like protein family. As to quaternary structure, heterodimer of an alpha and a beta chain.

Its function is as follows. This protein is one of the two subunits of integration host factor, a specific DNA-binding protein that functions in genetic recombination as well as in transcriptional and translational control. This chain is Integration host factor subunit alpha, found in Rhizobium etli (strain ATCC 51251 / DSM 11541 / JCM 21823 / NBRC 15573 / CFN 42).